A 791-amino-acid chain; its full sequence is ABC multidrug transporter mdr2 (791 aa).

Residue Asn147 is glycosylated (N-linked (GlcNAc...) asparagine). 2 helical membrane-spanning segments follow: residues 182–202 (ALAFLFLLVSSGITMSIPFSI) and 220–240 (LFGLSLPMFYGALAGILTLGA). One can recognise an ABC transmembrane type-1 domain in the interval 182-471 (ALAFLFLLVS…LSSFYSELMK (290 aa)). Asn303 is a glycosylation site (N-linked (GlcNAc...) asparagine). 2 helical membrane-spanning segments follow: residues 307 to 324 (GLRAAVSGAAGFGLMAYV) and 326 to 346 (LKLSSILALLLPPIGLGAFFY). Residues Asn352 and Asn421 are each glycosylated (N-linked (GlcNAc...) asparagine). Helical transmembrane passes span 422 to 442 (MTILALLYVGGGMVQSGAITI) and 445 to 465 (LTSFLMYTAYAGSSMFGLSSF). Residues 504–741 (IRFENVTFSY…PDGAFTKLME (238 aa)) form the ABC transporter domain. An N-linked (GlcNAc...) asparagine glycan is attached at Asn508. 539 to 546 (GPSGGGKS) lines the ATP pocket. Residue Asn692 is glycosylated (N-linked (GlcNAc...) asparagine). A compositionally biased stretch (polar residues) spans 754-769 (ANTPANPVAQETSWDL). The disordered stretch occupies residues 754–791 (ANTPANPVAQETSWDLQSDDGTEISEDTNIPSEPRTID). A compositionally biased stretch (acidic residues) spans 770–779 (QSDDGTEISE).

The protein belongs to the ABC transporter superfamily. ABCB family. Mitochondrial peptide exporter (TC 3.A.1.212) subfamily.

The protein localises to the cell membrane. In terms of biological role, pleiotropic ABC efflux transporter that may be involved in A.fumigatus adaptation to azoles. This Aspergillus fumigatus (strain ATCC MYA-4609 / CBS 101355 / FGSC A1100 / Af293) (Neosartorya fumigata) protein is ABC multidrug transporter mdr2.